The chain runs to 395 residues: uncharacterized protein (395 aa).

2 disordered regions span residues 17 to 155 (EVKK…QVKT) and 276 to 304 (EEREKSAIKQNKEQSSEGSKTANQTHEQK). 2 stretches are compositionally biased toward polar residues: residues 42–71 (DGNNQVNEPTGNDNTQVVENTEDISASNVV) and 81–96 (GDASTQSPETSENVVK). Residues 103 to 133 (VAEKPEKEDLAVIESEDKAAKPDGEIKKNVE) are compositionally biased toward basic and acidic residues. Residues 134–143 (TEVTSRSTSS) show a composition bias toward low complexity. 2 stretches are compositionally biased toward basic and acidic residues: residues 144 to 155 (QEKDELEKQVKT) and 276 to 290 (EEREKSAIKQNKEQS). A coiled-coil region spans residues 224 to 351 (LKMNGKEDDL…QRRLKELEAM (128 aa)). Residues 291–300 (SEGSKTANQT) show a composition bias toward polar residues.

Its subcellular location is the cytoplasm. This is an uncharacterized protein from Schizosaccharomyces pombe (strain 972 / ATCC 24843) (Fission yeast).